The following is a 447-amino-acid chain: 3-phosphoshikimate 1-carboxyvinyltransferase (447 aa).

3-phosphoshikimate is bound by residues Lys25, Ser26, and Arg30. Lys25 is a phosphoenolpyruvate binding site. The phosphoenolpyruvate site is built by Gly96 and Arg124. 3-phosphoshikimate-binding residues include Ser171, Ser172, Gln173, Ser203, Asp325, and Lys352. Phosphoenolpyruvate is bound at residue Gln173. The active-site Proton acceptor is Asp325. Arg356, Arg400, and Lys425 together coordinate phosphoenolpyruvate.

This sequence belongs to the EPSP synthase family. Monomer.

Its subcellular location is the cytoplasm. The catalysed reaction is 3-phosphoshikimate + phosphoenolpyruvate = 5-O-(1-carboxyvinyl)-3-phosphoshikimate + phosphate. It functions in the pathway metabolic intermediate biosynthesis; chorismate biosynthesis; chorismate from D-erythrose 4-phosphate and phosphoenolpyruvate: step 6/7. Its function is as follows. Catalyzes the transfer of the enolpyruvyl moiety of phosphoenolpyruvate (PEP) to the 5-hydroxyl of shikimate-3-phosphate (S3P) to produce enolpyruvyl shikimate-3-phosphate and inorganic phosphate. This chain is 3-phosphoshikimate 1-carboxyvinyltransferase, found in Bordetella petrii (strain ATCC BAA-461 / DSM 12804 / CCUG 43448).